Consider the following 903-residue polypeptide: Protein translocase subunit SecA (903 aa).

Residues Q89, 107 to 111 (GEGKT), and D502 each bind ATP. Residues C886, C888, C897, and H898 each coordinate Zn(2+).

The protein belongs to the SecA family. Monomer and homodimer. Part of the essential Sec protein translocation apparatus which comprises SecA, SecYEG and auxiliary proteins SecDF-YajC and YidC. Requires Zn(2+) as cofactor.

Its subcellular location is the cell inner membrane. The protein localises to the cytoplasm. It catalyses the reaction ATP + H2O + cellular proteinSide 1 = ADP + phosphate + cellular proteinSide 2.. Part of the Sec protein translocase complex. Interacts with the SecYEG preprotein conducting channel. Has a central role in coupling the hydrolysis of ATP to the transfer of proteins into and across the cell membrane, serving both as a receptor for the preprotein-SecB complex and as an ATP-driven molecular motor driving the stepwise translocation of polypeptide chains across the membrane. This is Protein translocase subunit SecA from Rhizobium meliloti (strain 1021) (Ensifer meliloti).